We begin with the raw amino-acid sequence, 179 residues long: ATP-dependent protease subunit HslV (179 aa).

Threonine 6 is a catalytic residue. Na(+)-binding residues include serine 162, cysteine 165, and threonine 168.

Belongs to the peptidase T1B family. HslV subfamily. A double ring-shaped homohexamer of HslV is capped on each side by a ring-shaped HslU homohexamer. The assembly of the HslU/HslV complex is dependent on binding of ATP.

The protein resides in the cytoplasm. It carries out the reaction ATP-dependent cleavage of peptide bonds with broad specificity.. Its activity is regulated as follows. Allosterically activated by HslU binding. Protease subunit of a proteasome-like degradation complex believed to be a general protein degrading machinery. The sequence is that of ATP-dependent protease subunit HslV from Maridesulfovibrio salexigens (strain ATCC 14822 / DSM 2638 / NCIMB 8403 / VKM B-1763) (Desulfovibrio salexigens).